Consider the following 203-residue polypeptide: Dephospho-CoA kinase (203 aa).

Residues 4–201 (IIGLTGGIGS…RKYLMLARKH (198 aa)) enclose the DPCK domain. Position 12–17 (12–17 (GSGKTR)) interacts with ATP.

The protein belongs to the CoaE family.

Its subcellular location is the cytoplasm. The enzyme catalyses 3'-dephospho-CoA + ATP = ADP + CoA + H(+). Its pathway is cofactor biosynthesis; coenzyme A biosynthesis; CoA from (R)-pantothenate: step 5/5. Its function is as follows. Catalyzes the phosphorylation of the 3'-hydroxyl group of dephosphocoenzyme A to form coenzyme A. This Nitrosomonas europaea (strain ATCC 19718 / CIP 103999 / KCTC 2705 / NBRC 14298) protein is Dephospho-CoA kinase.